We begin with the raw amino-acid sequence, 96 residues long: Transcriptional regulator ATRY (96 aa).

A GATA-type; atypical zinc finger spans residues 1 to 12 (VICTACGQQVNQ). Residues 1–96 (VICTACGQQV…IAVCDSVLEN (96 aa)) enclose the ADD domain. The PHD-type; atypical zinc-finger motif lies at 27–82 (LICKRWCAEGGNLICCDSCHNAFCKKCIWRNLGRKEISKIMNEKNEWHCYICCPEP).

It belongs to the SNF2/RAD54 helicase family. As to expression, expressed in developing and adult testis. Also weakly expressed in prostate and epididymis.

It is found in the nucleus. The catalysed reaction is ATP + H2O = ADP + phosphate + H(+). Its function is as follows. Could be a global transcriptional regulator. Modifies gene expression by affecting chromatin. The polypeptide is Transcriptional regulator ATRY (ATRY) (Notamacropus eugenii (Tammar wallaby)).